We begin with the raw amino-acid sequence, 113 residues long: Large ribosomal subunit protein uL22 (113 aa).

It belongs to the universal ribosomal protein uL22 family. In terms of assembly, part of the 50S ribosomal subunit.

Functionally, this protein binds specifically to 23S rRNA; its binding is stimulated by other ribosomal proteins, e.g. L4, L17, and L20. It is important during the early stages of 50S assembly. It makes multiple contacts with different domains of the 23S rRNA in the assembled 50S subunit and ribosome. In terms of biological role, the globular domain of the protein is located near the polypeptide exit tunnel on the outside of the subunit, while an extended beta-hairpin is found that lines the wall of the exit tunnel in the center of the 70S ribosome. This is Large ribosomal subunit protein uL22 from Solibacter usitatus (strain Ellin6076).